The chain runs to 128 residues: Aspartate 1-decarboxylase (128 aa).

The active-site Schiff-base intermediate with substrate; via pyruvic acid is the S25. S25 bears the Pyruvic acid (Ser) mark. Residue T57 participates in substrate binding. The active-site Proton donor is the Y58. 73 to 75 (GSA) is a substrate binding site.

The protein belongs to the PanD family. As to quaternary structure, heterooctamer of four alpha and four beta subunits. Requires pyruvate as cofactor. Post-translationally, is synthesized initially as an inactive proenzyme, which is activated by self-cleavage at a specific serine bond to produce a beta-subunit with a hydroxyl group at its C-terminus and an alpha-subunit with a pyruvoyl group at its N-terminus.

The protein resides in the cytoplasm. The catalysed reaction is L-aspartate + H(+) = beta-alanine + CO2. The protein operates within cofactor biosynthesis; (R)-pantothenate biosynthesis; beta-alanine from L-aspartate: step 1/1. In terms of biological role, catalyzes the pyruvoyl-dependent decarboxylation of aspartate to produce beta-alanine. This is Aspartate 1-decarboxylase from Burkholderia pseudomallei (strain 668).